The following is a 554-amino-acid chain: Gamma-aminobutyric acid receptor subunit alpha-4 (554 aa).

An N-terminal signal peptide occupies residues 1–35 (MVSAKKVPAIALSAGVSFALLRFLCLAVCLNESPG). The Extracellular portion of the chain corresponds to 36–259 (QNQKEEKLCT…FHLRRKMGYF (224 aa)). The N-linked (GlcNAc...) asparagine glycan is linked to Asn47. Arg100 provides a ligand contact to 4-aminobutanoate. Asn144 and Asn157 each carry an N-linked (GlcNAc...) asparagine glycan. Thr163 is a 4-aminobutanoate binding site. A disulfide bridge connects residues Cys172 and Cys186. A helical transmembrane segment spans residues 260–280 (MIQTYIPCIMTVILSQVSFWI). Residues 281–284 (NKES) are Cytoplasmic-facing. The chain crosses the membrane as a helical span at residues 285–305 (VPARTVFGITTVLTMTTLSIS). Residues 306 to 318 (ARHSLPKVSYATA) lie on the Extracellular side of the membrane. Residues 319-341 (MDWFIAVCFAFVFSALIEFAAVN) traverse the membrane as a helical segment. Topologically, residues 342-517 (YFTNIQMEKA…PPPSGSGTSK (176 aa)) are cytoplasmic. Disordered stretches follow at residues 350-381 (KAKR…QNTN), 397-435 (ESDV…SPNP), 452-471 (PSAS…ASVG), and 495-515 (ATGK…GSGT). Residues 410-422 (SSKSSTVVQESSK) are compositionally biased toward low complexity. The segment covering 502–511 (TPPPSAPPPS) has biased composition (pro residues). The helical transmembrane segment at 518–540 (IDKYARILFPVTFGAFNMVYWVV) threads the bilayer. Over 541-554 (YLSKDTMEKSESLM) the chain is Extracellular.

Belongs to the ligand-gated ion channel (TC 1.A.9) family. Gamma-aminobutyric acid receptor (TC 1.A.9.5) subfamily. GABRA4 sub-subfamily. Heteropentamer, formed by a combination of alpha (GABRA1-6), beta (GABRB1-3), gamma (GABRG1-3), delta (GABRD), epsilon (GABRE), rho (GABRR1-3), pi (GABRP) and theta (GABRQ) chains, each subunit exhibiting distinct physiological and pharmacological properties. In terms of tissue distribution, expressed in the brain.

It localises to the cell membrane. It is found in the postsynaptic cell membrane. It catalyses the reaction chloride(in) = chloride(out). With respect to regulation, potentiated by histamine. Alpha subunit of the heteropentameric ligand-gated chloride channel gated by gamma-aminobutyric acid (GABA), a major inhibitory neurotransmitter in the brain. GABA-gated chloride channels, also named GABA(A) receptors (GABAAR), consist of five subunits arranged around a central pore and contain GABA active binding site(s) located at the alpha and beta subunit interface(s). When activated by GABA, GABAARs selectively allow the flow of chloride anions across the cell membrane down their electrochemical gradient. GABAARs containing alpha-4 are predominantly extrasynaptic, contributing to tonic inhibition in dentate granule cells and thalamic relay neurons. Extrasynaptic alpha-4-containing GABAARs control levels of excitability and network activity. GABAAR containing alpha-4-beta-3-delta subunits can simultaneously bind GABA and histamine where histamine binds at the interface of two neighboring beta subunits, which may be involved in the regulation of sleep and wakefulness. The protein is Gamma-aminobutyric acid receptor subunit alpha-4 of Homo sapiens (Human).